We begin with the raw amino-acid sequence, 200 residues long: ATP synthase subunit s, mitochondrial (200 aa).

The transit peptide at 1-25 (MMPFGKISQQLCGVKKLPWSCDSRY) directs the protein to the mitochondrion. Residues 1 to 61 (MMPFGKISQQ…SEWLLRCGAM (61 aa)) are N-terminal domain. A Mg(2+)-binding site is contributed by Gly-59. 4 LRR repeats span residues 62 to 87 (VRYHGQERWQKDYNHLPTGPLDKYKI), 88 to 116 (QAIDATDSCIMSIGFDHMEGLEHVEKIRL), 117 to 141 (CKCHYIEDDCLLRLSQLENLQKTIL), and 142 to 173 (EMEIISCGNITDKGIIALRHLRNLKYLLLSDL). Thr-93 serves as a coordination point for Mg(2+).

This sequence belongs to the ATP synthase subunit s family. As to quaternary structure, homotetramer. Associates with ATP synthase.

It is found in the mitochondrion. Its subcellular location is the mitochondrion inner membrane. Functionally, involved in regulation of mitochondrial membrane ATP synthase. Necessary for H(+) conduction of ATP synthase. Facilitates energy-driven catalysis of ATP synthesis by blocking a proton leak through an alternative proton exit pathway. This Homo sapiens (Human) protein is ATP synthase subunit s, mitochondrial.